The sequence spans 170 residues: 3-hydroxyacyl-[acyl-carrier-protein] dehydratase FabZ (170 aa).

His-66 is an active-site residue.

Belongs to the thioester dehydratase family. FabZ subfamily.

The protein localises to the cytoplasm. The enzyme catalyses a (3R)-hydroxyacyl-[ACP] = a (2E)-enoyl-[ACP] + H2O. Its function is as follows. Involved in unsaturated fatty acids biosynthesis. Catalyzes the dehydration of short chain beta-hydroxyacyl-ACPs and long chain saturated and unsaturated beta-hydroxyacyl-ACPs. This Granulibacter bethesdensis (strain ATCC BAA-1260 / CGDNIH1) protein is 3-hydroxyacyl-[acyl-carrier-protein] dehydratase FabZ.